Consider the following 357-residue polypeptide: LINE-1 retrotransposable element ORF1 protein (357 aa).

Residues 1 to 40 (MAKGKRKNPTNRNQDHSPSSERSTPTPPSPGHPNTTENLD) are disordered. Residues 59-156 (HKSLKDLQES…IENIDTTVKE (98 aa)) are a coiled coil. The interval 179 to 274 (NLRIIGIDEN…KGRPIRITPD (96 aa)) is RNA recognition motif (RRM) domain. Positions 278–339 (ETMKARRAWT…STNPALQRII (62 aa)) are C-terminal domain (CTD).

The protein belongs to the transposase 22 family. As to quaternary structure, homotrimer (via coiled coil domain). May also form larger homooligomers. Interacts with Tex19.1 and UBR2. Interacts with MOV10. Polyubiquitinated, probably by UBR2, which induces its degradation. Expressed in meiotic spermatocytes and in the cerebellum (at protein level).

Its subcellular location is the nucleus. The protein localises to the nucleolus. The protein resides in the cytoplasm. It localises to the cytoplasmic ribonucleoprotein granule. It is found in the stress granule. In terms of biological role, nucleic acid-binding protein which is essential for retrotransposition of LINE-1 elements in the genome. Functions as a nucleic acid chaperone binding its own transcript and therefore preferentially mobilizing the transcript from which they are encoded. The sequence is that of LINE-1 retrotransposable element ORF1 protein from Mus musculus (Mouse).